The following is a 122-amino-acid chain: uncharacterized protein (122 aa).

This is an uncharacterized protein from Caenorhabditis elegans.